A 163-amino-acid polypeptide reads, in one-letter code: UPF0523 protein B (163 aa).

Belongs to the UPF0523 family.

This Dictyostelium discoideum (Social amoeba) protein is UPF0523 protein B.